The chain runs to 339 residues: Biotin synthase (339 aa).

The region spanning 55–282 is the Radical SAM core domain; sequence NAVQLSTLLS…KAVVRLSAGR (228 aa). [4Fe-4S] cluster is bound by residues Cys70, Cys74, and Cys77. Cys114, Cys145, Cys205, and Arg277 together coordinate [2Fe-2S] cluster.

Belongs to the radical SAM superfamily. Biotin synthase family. In terms of assembly, homodimer. [4Fe-4S] cluster is required as a cofactor. [2Fe-2S] cluster serves as cofactor.

It carries out the reaction (4R,5S)-dethiobiotin + (sulfur carrier)-SH + 2 reduced [2Fe-2S]-[ferredoxin] + 2 S-adenosyl-L-methionine = (sulfur carrier)-H + biotin + 2 5'-deoxyadenosine + 2 L-methionine + 2 oxidized [2Fe-2S]-[ferredoxin]. The protein operates within cofactor biosynthesis; biotin biosynthesis; biotin from 7,8-diaminononanoate: step 2/2. Catalyzes the conversion of dethiobiotin (DTB) to biotin by the insertion of a sulfur atom into dethiobiotin via a radical-based mechanism. The chain is Biotin synthase from Burkholderia cenocepacia (strain ATCC BAA-245 / DSM 16553 / LMG 16656 / NCTC 13227 / J2315 / CF5610) (Burkholderia cepacia (strain J2315)).